A 178-amino-acid chain; its full sequence is Leukemia NUP98 fusion partner 1 (178 aa).

3 disordered regions span residues glutamate 28–valine 55, serine 89–isoleucine 108, and isoleucine 147–glutamate 178. Over residues arginine 34–threonine 47 the composition is skewed to basic residues. A compositionally biased stretch (basic and acidic residues) spans isoleucine 147–alanine 167.

The chain is Leukemia NUP98 fusion partner 1 (LNP1) from Homo sapiens (Human).